Here is an 89-residue protein sequence, read N- to C-terminus: MPAPRYRSRSYRRIYRRTPGGRIVIHYKRRKPGKPKCAICGAELHGVPRGRPVEIRKLPKSQRRPERPYGGYLCPRCLKRLMIQKARNL.

It belongs to the eukaryotic ribosomal protein eL34 family.

The chain is Large ribosomal subunit protein eL34 (rpl34e) from Methanocaldococcus jannaschii (strain ATCC 43067 / DSM 2661 / JAL-1 / JCM 10045 / NBRC 100440) (Methanococcus jannaschii).